A 471-amino-acid chain; its full sequence is Vanillate/3-O-methylgallate O-demethylase (471 aa).

Y31 is a substrate binding site. Q57 provides a ligand contact to (6S)-5,6,7,8-tetrahydrofolate. Residue H60 participates in substrate binding. Q93 and V120 together coordinate (6S)-5,6,7,8-tetrahydrofolate. A substrate-binding site is contributed by R122. Residues Q165 and E215 each contribute to the (6S)-5,6,7,8-tetrahydrofolate site. Position 247–250 (247–250 (YPSN)) interacts with substrate. W256 contacts (6S)-5,6,7,8-tetrahydrofolate.

Belongs to the GcvT family. In terms of assembly, homodimer.

It carries out the reaction vanillate + (6S)-5,6,7,8-tetrahydrofolate = (6S)-5-methyl-5,6,7,8-tetrahydrofolate + 3,4-dihydroxybenzoate. The enzyme catalyses 3-O-methylgallate + (6S)-5,6,7,8-tetrahydrofolate = 3,4,5-trihydroxybenzoate + (6S)-5-methyl-5,6,7,8-tetrahydrofolate. The protein operates within secondary metabolite metabolism; lignin degradation. Involved in the catabolism of vanillate and syringate. Catalyzes the transfer of a methyl moiety from vanillate or 3-O-methylgallate (3MGA) to tetrahydrofolate, forming protocatechuate (PCA) or gallate, respectively, and methyl-tetrahydrofolate. Has similar activities with both substrates. Cannot use syringate. Uses an ordered, sequential kinetic mechanism. The protein is Vanillate/3-O-methylgallate O-demethylase of Sphingobium sp. (strain NBRC 103272 / SYK-6).